Here is a 183-residue protein sequence, read N- to C-terminus: MGNIFSSMFDKLWGSNKELRILILGLDGAGKTTILYRLQIGEVVTTKPTIGFNVETLSYKNLKLNVWDLGGQTSIRPYWRCYYADTAAVIFVVDSTDKDRMSTASKELHLMLQEEELQDAALLVFANKQDQPGALSASEVSKELNLVELKDRSWSIVASSAIKGEGITEGLDWLIDVIKEEQL.

Gly-2 carries N-myristoyl glycine lipidation. Residues 25-32 (GLDGAGKT), 68-72 (DLGGQ), and 127-130 (NKQD) each bind GTP.

Belongs to the small GTPase superfamily. Arf family. Homodimer. Interacts with IMH1 (via GRIP domain); the interaction is dependent on GTP. Interacts with MON2.

The protein resides in the golgi apparatus. In terms of biological role, recruits golgins such as IMH1 to the Golgi. Can bind and hydrolyze GTP. May be involved in trafficking events within the endosomal system. This is ADP-ribosylation factor-like protein 1 (ARL1) from Saccharomyces cerevisiae (strain ATCC 204508 / S288c) (Baker's yeast).